The chain runs to 616 residues: uncharacterized protein (616 aa).

2 disordered regions span residues 166-243 (SRTY…TPEL) and 272-298 (DHEEEEGQDDDEETEIEIDRGGPIEEI). The span at 184 to 200 (RVDESRPSENSSRHDYV) shows a compositional bias: basic and acidic residues. Polar residues predominate over residues 221 to 237 (TRTSNVTQTQPPTNQVF). The span at 272–287 (DHEEEEGQDDDEETEI) shows a compositional bias: acidic residues. The region spanning 343 to 417 (ILIKLKFMND…VHCHISTTPY (75 aa)) is the Ubiquitin-like domain.

This is an uncharacterized protein from Caenorhabditis elegans.